Consider the following 376-residue polypeptide: Probable ribonucleoside-diphosphate reductase small subunit 048L (376 aa).

The Fe cation site is built by Asp-110, Glu-140, and His-143. The active site involves Tyr-147. Glu-217, Glu-251, and His-254 together coordinate Fe cation.

It belongs to the ribonucleoside diphosphate reductase small chain family. Heterotetramer composed of a homodimer of the large subunit (R1) and a homodimer of the small subunit (R2). Larger multisubunit protein complex are also active, composed of (R1)n(R2)n. Requires Fe cation as cofactor.

The enzyme catalyses a 2'-deoxyribonucleoside 5'-diphosphate + [thioredoxin]-disulfide + H2O = a ribonucleoside 5'-diphosphate + [thioredoxin]-dithiol. Its function is as follows. Ribonucleoside-diphosphate reductase holoenzyme provides the precursors necessary for viral DNA synthesis. Allows virus growth in non-dividing cells. Catalyzes the biosynthesis of deoxyribonucleotides from the corresponding ribonucleotides. The sequence is that of Probable ribonucleoside-diphosphate reductase small subunit 048L from Invertebrate iridescent virus 3 (IIV-3).